A 396-amino-acid chain; its full sequence is ATP-dependent RNA helicase eIF4A (396 aa).

Residues 22–50 (HKFDELKLKEVLLRGIYGYGFVDPSAIQQ) carry the Q motif motif. In terms of domain architecture, Helicase ATP-binding spans 53–223 (ILPIIEGHDV…DKFMNKPVRI (171 aa)). Residue 66–73 (AQSGTGKT) coordinates ATP. The short motif at 171–174 (DEAD) is the DEAD box element. A Helicase C-terminal domain is found at 234–395 (GIQQYYINVE…ELPANIADLF (162 aa)).

The protein belongs to the DEAD box helicase family. eIF4A subfamily. Component of the eIF4F complex, which composition varies with external and internal environmental conditions. It is composed of at least eIF4A, eIF4E and eIF4G.

It localises to the cytoplasm. It catalyses the reaction ATP + H2O = ADP + phosphate + H(+). Its function is as follows. ATP-dependent RNA helicase which is a subunit of the eIF4F complex involved in cap recognition and is required for mRNA binding to ribosome. In the current model of translation initiation, eIF4A unwinds RNA secondary structures in the 5'-UTR of mRNAs which is necessary to allow efficient binding of the small ribosomal subunit, and subsequent scanning for the initiator codon. In Eremothecium gossypii (strain ATCC 10895 / CBS 109.51 / FGSC 9923 / NRRL Y-1056) (Yeast), this protein is ATP-dependent RNA helicase eIF4A (TIF1).